The following is a 1228-amino-acid chain: Reverse gyrase (1228 aa).

The RG N-terminal-type zinc-finger motif lies at 1–41 (MEVPLVAYLHSCPNCGGPITSDRLASGLPCRECLPDGAKAG). The Zn(2+) site is built by Cys12, Cys15, Cys30, and Cys33. ATP-binding positions include Gln88 and 105–112 (APTGSGKT). The Helicase ATP-binding domain occupies 92 to 255 (ARRFVRGKSF…NLTKQLRKAE (164 aa)). The short motif at 211 to 214 (DDVD) is the DEAD box element. Residues 631–1228 (DLMRTILMVV…RKEVLPHLAS (598 aa)) are topoisomerase I. Residues 635–809 (TILMVVESPT…DIRRVEFHEV (175 aa)) enclose the Toprim domain. Mg(2+) is bound by residues Glu641 and Asp778. The Topo IA-type catalytic domain occupies 825 to 1223 (NFSLVKAQIV…LYDEFRKEVL (399 aa)). The active-site O-(5'-phospho-DNA)-tyrosine intermediate is the Tyr967.

In the N-terminal section; belongs to the DEAD box helicase family. DDVD subfamily. It in the C-terminal section; belongs to the type IA topoisomerase family. As to quaternary structure, monomer. Zn(2+) serves as cofactor. The cofactor is Mg(2+).

It is found in the cytoplasm. It carries out the reaction ATP + H2O = ADP + phosphate + H(+). In terms of biological role, modifies the topological state of DNA by introducing positive supercoils in an ATP-dependent process, increasing the linking number in steps of +1. Binds to single-stranded DNA, transiently cleaves and then rejoins the ends, introducing a positive supercoil in the process. The scissile phosphodiester is attacked by the catalytic tyrosine of the enzyme, resulting in the formation of a DNA-(5'-phosphotyrosyl)-enzyme intermediate. Probably involved in rewinding DNA strands in regions of the chromosome that have opened up to allow replication, transcription, DNA repair and/or for DNA protection. This is Reverse gyrase from Pyrobaculum aerophilum (strain ATCC 51768 / DSM 7523 / JCM 9630 / CIP 104966 / NBRC 100827 / IM2).